Consider the following 576-residue polypeptide: MTSKISTTYEEEGRQSKIQPRAFVITRSGPSSKSSSFSARQSYASSRQSITPGVYQQLSSSGITDFRGTREKEKREMQNLNERLASYIEKVHFLDAQVKKLEAENEALRNRKSESLQPIRDAYENELAQARKVIDELSSTKGVSEAKVAGLQDEIASLRELIVTYENQSKDYRKKIESLGNQIGEYEGELHTLRIRCGSLEDENAKVRELLDKIQEQNRRLRADLDTETAAHIEADCLAQTKTEEAEFYKDLLDQLELLKPEPIQIKGMDYAEFWKSELSKCVREIQSAYDEKIDMIQQDTEAKYSAQLNSLRSGNVKDGMQLQHVQEEVKKLRTQAGEKNAMYAELAAKFASLQAERDSIGRQCSELERELEELRIKYNQDIGDLSNELSAVLAQLQILTDAKITMELEIACYRKLLEGEESRVGLRSLVEQAIGVQGRGTASLKDTIQQSTSSGSMTIQRSSKGPIAFNSVDQSGSNIVIENTTSGARAKTQSLRGWRIDKTVAGRVAASIQLKDYEIPPNTKYTIWAKGAKDRATADNEQIADIFSLGVGSCTWTIVDEAGNEKATLIAKFSG.

Residues 1–51 are disordered; it reads MTSKISTTYEEEGRQSKIQPRAFVITRSGPSSKSSSFSARQSYASSRQSIT. Positions 2–75 are head; that stretch reads TSKISTTYEE…FRGTREKEKR (74 aa). Low complexity predominate over residues 28–49; that stretch reads SGPSSKSSSFSARQSYASSRQS. The IF rod domain occupies 73–425; sequence EKREMQNLNE…KLLEGEESRV (353 aa). The interval 76–108 is coil 1A; the sequence is EMQNLNERLASYIEKVHFLDAQVKKLEAENEAL. The segment at 109–122 is linker 1; the sequence is RNRKSESLQPIRDA. Residues 123 to 260 are coil 1B; that stretch reads YENELAQARK…DLLDQLELLK (138 aa). The segment at 261-278 is linker 2; it reads PEPIQIKGMDYAEFWKSE. The interval 279-425 is coil 2; the sequence is LSKCVREIQS…KLLEGEESRV (147 aa). Residues 426–576 form a tail region; it reads GLRSLVEQAI…KATLIAKFSG (151 aa). The region spanning 456–574 is the LTD domain; sequence GSMTIQRSSK…NEKATLIAKF (119 aa).

It belongs to the intermediate filament family. Can form homopolymers.

It localises to the cytoplasm. The protein is Non-neuronal cytoplasmic intermediate filament protein of Cornu aspersum (Brown garden snail).